We begin with the raw amino-acid sequence, 247 residues long: Probable dihydroorotate dehydrogenase B (NAD(+)), electron transfer subunit (247 aa).

Residues 1–87 (MLRRVMIKET…RGPYGNGFKS (87 aa)) form the FAD-binding FR-type domain. Cys-200, Cys-205, Cys-208, and Cys-216 together coordinate [2Fe-2S] cluster.

The protein belongs to the PyrK family. In terms of assembly, heterotetramer of 2 PyrK and 2 PyrD type B subunits. It depends on [2Fe-2S] cluster as a cofactor. The cofactor is FAD.

It functions in the pathway pyrimidine metabolism; UMP biosynthesis via de novo pathway; orotate from (S)-dihydroorotate (NAD(+) route): step 1/1. In terms of biological role, responsible for channeling the electrons from the oxidation of dihydroorotate from the FMN redox center in the PyrD type B subunit to the ultimate electron acceptor NAD(+). This is Probable dihydroorotate dehydrogenase B (NAD(+)), electron transfer subunit from Pyrococcus abyssi (strain GE5 / Orsay).